The following is a 172-amino-acid chain: MEYFNVGKIVNTQGLQGEMRVLSVSDFAEERFKKGSQLALFDDKDQFVQEVTIVSHRKQKHFDIIKFKDMYHINAIEKYKGYTLKVSKANQGDLQEGEFYYHQIIGMAVYEKDRLIGYVKEILQPGANDVWVVKRQGKRDLLLPYIPPVVLSVDVPNKRVDVELMEGLDDED.

The region spanning 96-168 is the PRC barrel domain; sequence EGEFYYHQII…RVDVELMEGL (73 aa).

This sequence belongs to the RimM family. In terms of assembly, binds ribosomal protein uS19.

The protein resides in the cytoplasm. Its function is as follows. An accessory protein needed during the final step in the assembly of 30S ribosomal subunit, possibly for assembly of the head region. Essential for efficient processing of 16S rRNA. May be needed both before and after RbfA during the maturation of 16S rRNA. It has affinity for free ribosomal 30S subunits but not for 70S ribosomes. The sequence is that of Ribosome maturation factor RimM from Streptococcus pyogenes serotype M18 (strain MGAS8232).